The following is a 375-amino-acid chain: MTDVELRVEALSLSGVSAIPPEYVRPEEERADLGDALELARAASDDDATARIPVVDISAFDNDGDGRHACVEAVRAAAEEWGVIHIAGHGLPGDVLGRLRAAGEAFFALPIAEKEAYANDPAAGRLQGYGSKLAANASGKREWEDYLFHLVHPDHLADHSLWPANPPEYVPVSRDFGGRVRTLASKLLAILSLGLGLPEETLERRLRGHELAGVDDDLLLQLKINYYPRCPRPDLAVGVEAHTDVSALSFILHNGVPGLQVHHAGSWVTARPEPGTIVVHVGDALEILTNGRYTSVLHRGLVSRDAVRLSWVVFCEPPPESVLLQPVQELLADGAGKPLFAPRTFKQHVQRKLFKKLKDQQDNNAAAASNGMITK.

Positions 218–317 constitute a Fe2OG dioxygenase domain; the sequence is LLLQLKINYY…RLSWVVFCEP (100 aa). Residues histidine 242, aspartate 244, and histidine 298 each contribute to the Fe cation site. Arginine 308 contacts 2-oxoglutarate.

It belongs to the iron/ascorbate-dependent oxidoreductase family. L-ascorbate is required as a cofactor. It depends on Fe(2+) as a cofactor.

The enzyme catalyses a (2R,3S,4S)-leucoanthocyanidin + 2-oxoglutarate + O2 = a 4-H-anthocyanidin with a 3-hydroxy group + succinate + CO2 + 2 H2O. It participates in pigment biosynthesis; anthocyanin biosynthesis. Its function is as follows. Involved in anthocyanin and protoanthocyanidin biosynthesis by catalyzing the oxidation of leucoanthocyanidins into anthocyanidins. Is able to synthesize anthocyanin pigments from leucoanthocyanidins in aleurone tissue. Converts dihydroquercetin to quercetin in vitro. The polypeptide is Leucoanthocyanidin dioxygenase 1 (Oryza sativa subsp. indica (Rice)).